Here is a 219-residue protein sequence, read N- to C-terminus: Small ribosomal subunit protein uS3 (219 aa).

Residues 38–106 (IREYITARLK…RVHINILEVK (69 aa)) form the KH type-2 domain.

This sequence belongs to the universal ribosomal protein uS3 family. Part of the 30S ribosomal subunit. Forms a tight complex with proteins S10 and S14.

In terms of biological role, binds the lower part of the 30S subunit head. Binds mRNA in the 70S ribosome, positioning it for translation. The sequence is that of Small ribosomal subunit protein uS3 from Bacillus cytotoxicus (strain DSM 22905 / CIP 110041 / 391-98 / NVH 391-98).